Here is an 857-residue protein sequence, read N- to C-terminus: Bifunctional levopimaradiene synthase, chloroplastic (857 aa).

The transit peptide at Met-1 to Ser-33 directs the protein to the chloroplast. Lys-257 provides a ligand contact to substrate. The Mg(2+) site is built by Asp-390 and Asp-392. Residues Asp-390–Asp-393 carry the DXDD motif motif. Position 477 (Lys-477) interacts with substrate. 5 residues coordinate Mg(2+): Asp-609, Asp-613, Asn-753, Thr-757, and Glu-761. The short motif at Asp-609–Asp-613 is the DDXXD motif element.

This sequence belongs to the terpene synthase family. Tpsd subfamily. The cofactor is Mg(2+).

It is found in the plastid. The protein localises to the chloroplast. It catalyses the reaction (2E,6E,10E)-geranylgeranyl diphosphate = (+)-copalyl diphosphate. The enzyme catalyses (+)-copalyl diphosphate = abieta-7,13-diene + diphosphate. The catalysed reaction is (+)-copalyl diphosphate = abieta-8(14),12-diene + diphosphate. It carries out the reaction (+)-copalyl diphosphate = neoabietadiene + diphosphate. Its pathway is terpene metabolism; oleoresin biosynthesis. Its function is as follows. Involved in defensive oleoresin formation in conifers in response to insect attack or other injury. Involved in diterpene (C20) olefins biosynthesis. Bifunctional enzyme that catalyzes two sequential cyclizations of geranylgeranyl diphosphate (GGPP) to levopimaradiene. Levopimaradiene is the major products of the enzyme with abietadiene and neoabietadiene. No activity with farnesyl diphosphate (FPP) as substrate. The sequence is that of Bifunctional levopimaradiene synthase, chloroplastic from Pinus banksiana (Jack pine).